The primary structure comprises 541 residues: Propionyl-CoA carboxylase beta chain, mitochondrial (541 aa).

The N-terminal 28 residues, 1–28, are a transit peptide targeting the mitochondrion; the sequence is MAAAIRIRAVAAGARLSVLNCGLGITTR. A CoA carboxyltransferase N-terminal domain is found at 34–292; that stretch reads PVSVKERIDN…SSQDPAPIRE (259 aa). Residues 34 to 535 form a carboxyltransferase region; the sequence is PVSVKERIDN…SKKVHRPWRK (502 aa). Position 73 is a phosphoserine (S73). An N6-acetyllysine; alternate modification is found at K101. K101 carries the post-translational modification N6-succinyllysine; alternate. Residue K250 is modified to N6-succinyllysine. In terms of domain architecture, CoA carboxyltransferase C-terminal spans 296 to 535; the sequence is PSDRLVPELD…SKKVHRPWRK (240 aa). The acyl-CoA binding stretch occupies residues 327–360; the sequence is DEREFFEIMPSYAKNIVVGFARMNGRTVGIVGNQ. An N6-acetyllysine; alternate mark is found at K476 and K491. K476 and K491 each carry N6-succinyllysine; alternate.

Belongs to the AccD/PCCB family. In terms of assembly, the holoenzyme is a dodecamer composed of 6 PCCA/alpha subunits and 6 PCCB/beta subunits. In terms of tissue distribution, broadly expressed. Most abundantly expressed in the kidney, liver, small intestine and stomach.

Its subcellular location is the mitochondrion matrix. The enzyme catalyses propanoyl-CoA + hydrogencarbonate + ATP = (S)-methylmalonyl-CoA + ADP + phosphate + H(+). The catalysed reaction is butanoyl-CoA + hydrogencarbonate + ATP = (2S)-ethylmalonyl-CoA + ADP + phosphate + H(+). The protein operates within metabolic intermediate metabolism; propanoyl-CoA degradation; succinyl-CoA from propanoyl-CoA: step 1/3. In terms of biological role, this is one of the 2 subunits of the biotin-dependent propionyl-CoA carboxylase (PCC), a mitochondrial enzyme involved in the catabolism of odd chain fatty acids, branched-chain amino acids isoleucine, threonine, methionine, and valine and other metabolites. Propionyl-CoA carboxylase catalyzes the carboxylation of propionyl-CoA/propanoyl-CoA to D-methylmalonyl-CoA/(S)-methylmalonyl-CoA. Within the holoenzyme, the alpha subunit catalyzes the ATP-dependent carboxylation of the biotin carried by the biotin carboxyl carrier (BCC) domain, while the beta subunit then transfers the carboxyl group from carboxylated biotin to propionyl-CoA. Propionyl-CoA carboxylase also significantly acts on butyryl-CoA/butanoyl-CoA, which is converted to ethylmalonyl-CoA/(2S)-ethylmalonyl-CoA. Other alternative minor substrates include (2E)-butenoyl-CoA/crotonoyl-CoA. The chain is Propionyl-CoA carboxylase beta chain, mitochondrial from Mus musculus (Mouse).